A 720-amino-acid chain; its full sequence is MASLAGDRWREALKNHDIFNNLQERLHLEPQGTSKRIAKNLTFCLNGDLFIWDSVESVFYTTNLRQLNSDGEPDTSRYQTLLCINPPLFEVCQVLVSPSQYHVALIGQRGATVLELPQRWGKKSEFEGGRIQINCKTIPVAERFFTSSASVTLRQAVWYPSETEEPHLVLLTSDNTIRFYNLKEPQSPARVLSVSQMDDDSSVHTRSRSYAASLGETAVAFDFGPLADSPHLSSLRMKAELVVYPLYILYGNGETFLNYISLSHSVGSLGKPMGPLPMYPAAEDNYGYDACAVLCLPCVPNILVIATESGMLYHCVVLEAEEEEDGGAVERWSRGSETAPSLYVFECVELELTLKLPAGEEEEITESDFTCPIRLHRDPLCQHRYHCTHEAGVHSVGLTWFKKLHKFLESDEEDKDSLQELAAEQRCIVEHILCTRPLANSLPAPVRGFWIVSDLSLGATMICITSTYECLLLPLLSSIRPASPPLLCSHPGAGSDSSPLRGLAEDSFEQHIRNILARSSTNPLMLRSGDKDSSPPPSECLQLLSRATQVFREEYILKLGLAHEEMQRRVKLLSGQKNKQLEDLALCREDRKSLTEAAERLADKYEDAKYRQEAIMNRVKRVLGSLRSQLPVLSDSEKDMRKELQTINDQLRHLDNGIKQVNMKKDYQKKQMNAGASPAHSSLTLNAHQRKCLQGVLKEQGEHIAGMMKQIKDIKNHFSF.

Positions 584-611 (LALCREDRKSLTEAAERLADKYEDAKYR) form a coiled coil.

Widely expressed. Higher levels of expression are detected in highly proliferative frontal regions of the embryo, e.g. brain, eye and anterior trunk.

Its subcellular location is the nucleus. It localises to the nuclear pore complex. Its function is as follows. Component of the nuclear pore complex. In Danio rerio (Zebrafish), this protein is Nucleoporin 88.